A 291-amino-acid polypeptide reads, in one-letter code: ATP synthase gamma chain (291 aa).

This sequence belongs to the ATPase gamma chain family. F-type ATPases have 2 components, CF(1) - the catalytic core - and CF(0) - the membrane proton channel. CF(1) has five subunits: alpha(3), beta(3), gamma(1), delta(1), epsilon(1). CF(0) has three main subunits: a, b and c.

The protein localises to the cell inner membrane. Produces ATP from ADP in the presence of a proton gradient across the membrane. The gamma chain is believed to be important in regulating ATPase activity and the flow of protons through the CF(0) complex. This is ATP synthase gamma chain from Pelagibacter ubique (strain HTCC1062).